The following is an 81-amino-acid chain: Penaeidin-3c (81 aa).

The signal sequence occupies residues 1 to 19 (MRLVVCLVFLASFALVCQG). Glutamine 20 carries the post-translational modification Pyrrolidone carboxylic acid. Intrachain disulfides connect cysteine 50-cysteine 65, cysteine 54-cysteine 72, and cysteine 66-cysteine 73. At serine 80 the chain carries Serine amide.

The protein belongs to the penaeidin family. In terms of tissue distribution, higher expression in hemocytes and to a lesser extent in heart, testis, gills, intestine, lymphoid organ and hepatopancreas. Traces in eyes and subcuticular epithelium. Not present in the brain.

The protein resides in the cytoplasmic granule. Functionally, antibacterial activity against M.luteus and E.coli bacteria. Antifungal activity against N.crassa and F.oxysporum. Presents chitin-binding activity. The polypeptide is Penaeidin-3c (Penaeus vannamei (Whiteleg shrimp)).